The following is a 90-amino-acid chain: Small ribosomal subunit protein uS17 (90 aa).

The protein belongs to the universal ribosomal protein uS17 family. Part of the 30S ribosomal subunit.

In terms of biological role, one of the primary rRNA binding proteins, it binds specifically to the 5'-end of 16S ribosomal RNA. The chain is Small ribosomal subunit protein uS17 from Burkholderia mallei (strain NCTC 10247).